The sequence spans 201 residues: Protease (201 aa).

Active-site residues include H55, D72, and C122.

Belongs to the peptidase C5 family. As to quaternary structure, interacts with protease cofactor pVI-C; this interaction is necessary for protease activation.

The protein resides in the virion. It localises to the host nucleus. It carries out the reaction Cleaves proteins of the adenovirus and its host cell at two consensus sites: -Yaa-Xaa-Gly-Gly-|-Xaa- and -Yaa-Xaa-Gly-Xaa-|-Gly- (in which Yaa is Met, Ile or Leu, and Xaa is any amino acid).. With respect to regulation, requires DNA and protease cofactor for maximal activation. Inside nascent virions, becomes partially activated by binding to the viral DNA, allowing it to cleave the cofactor that binds to the protease and fully activates it. Actin, like the viral protease cofactor, seems to act as a cofactor in the cleavage of cytokeratin 18 and of actin itself. Functionally, cleaves viral precursor proteins (pTP, pIIIa, pVI, pVII, pVIII, and pX) inside newly assembled particles giving rise to mature virions. Protease complexed to its cofactor slides along the viral DNA to specifically locate and cleave the viral precursors. Mature virions have a weakened organization compared to the unmature virions, thereby facilitating subsequent uncoating. Without maturation, the particle lacks infectivity and is unable to uncoat. Late in adenovirus infection, in the cytoplasm, may participate in the cytoskeleton destruction. Cleaves host cell cytoskeletal keratins K7 and K18. The protein is Protease of Pantherophis guttatus (Corn snake).